The primary structure comprises 40 residues: Photosystem II reaction center protein L (40 aa).

Residues 19 to 39 form a helical membrane-spanning segment; it reads SLFLGLLLVFVLGILFSSYFF.

It belongs to the PsbL family. As to quaternary structure, PSII is composed of 1 copy each of membrane proteins PsbA, PsbB, PsbC, PsbD, PsbE, PsbF, PsbH, PsbI, PsbJ, PsbK, PsbL, PsbM, PsbT, PsbX, PsbY, PsbZ, Psb30/Ycf12, peripheral proteins PsbO, CyanoQ (PsbQ), PsbU, PsbV and a large number of cofactors. It forms dimeric complexes.

The protein localises to the cellular thylakoid membrane. One of the components of the core complex of photosystem II (PSII). PSII is a light-driven water:plastoquinone oxidoreductase that uses light energy to abstract electrons from H(2)O, generating O(2) and a proton gradient subsequently used for ATP formation. It consists of a core antenna complex that captures photons, and an electron transfer chain that converts photonic excitation into a charge separation. This subunit is found at the monomer-monomer interface and is required for correct PSII assembly and/or dimerization. The chain is Photosystem II reaction center protein L from Synechococcus elongatus (strain ATCC 33912 / PCC 7942 / FACHB-805) (Anacystis nidulans R2).